The sequence spans 336 residues: Holliday junction branch migration complex subunit RuvB (336 aa).

The large ATPase domain (RuvB-L) stretch occupies residues 4-184 (ADRLVSADSS…FGIVQRLEFY (181 aa)). ATP-binding positions include Ile23, Arg24, Gly65, Lys68, Thr69, Thr70, 131–133 (EDY), Arg174, Tyr184, and Arg221. Thr69 serves as a coordination point for Mg(2+). The interval 185 to 255 (QIPDLQHIVS…IAAQALDMLN (71 aa)) is small ATPAse domain (RuvB-S). The head domain (RuvB-H) stretch occupies residues 258-336 (AEGFDYMDRK…HFGITPPEMP (79 aa)). DNA is bound by residues Arg294, Arg313, and Arg318.

The protein belongs to the RuvB family. As to quaternary structure, homohexamer. Forms an RuvA(8)-RuvB(12)-Holliday junction (HJ) complex. HJ DNA is sandwiched between 2 RuvA tetramers; dsDNA enters through RuvA and exits via RuvB. An RuvB hexamer assembles on each DNA strand where it exits the tetramer. Each RuvB hexamer is contacted by two RuvA subunits (via domain III) on 2 adjacent RuvB subunits; this complex drives branch migration. In the full resolvosome a probable DNA-RuvA(4)-RuvB(12)-RuvC(2) complex forms which resolves the HJ.

The protein resides in the cytoplasm. It catalyses the reaction ATP + H2O = ADP + phosphate + H(+). Functionally, the RuvA-RuvB-RuvC complex processes Holliday junction (HJ) DNA during genetic recombination and DNA repair, while the RuvA-RuvB complex plays an important role in the rescue of blocked DNA replication forks via replication fork reversal (RFR). RuvA specifically binds to HJ cruciform DNA, conferring on it an open structure. The RuvB hexamer acts as an ATP-dependent pump, pulling dsDNA into and through the RuvAB complex. RuvB forms 2 homohexamers on either side of HJ DNA bound by 1 or 2 RuvA tetramers; 4 subunits per hexamer contact DNA at a time. Coordinated motions by a converter formed by DNA-disengaged RuvB subunits stimulates ATP hydrolysis and nucleotide exchange. Immobilization of the converter enables RuvB to convert the ATP-contained energy into a lever motion, pulling 2 nucleotides of DNA out of the RuvA tetramer per ATP hydrolyzed, thus driving DNA branch migration. The RuvB motors rotate together with the DNA substrate, which together with the progressing nucleotide cycle form the mechanistic basis for DNA recombination by continuous HJ branch migration. Branch migration allows RuvC to scan DNA until it finds its consensus sequence, where it cleaves and resolves cruciform DNA. This chain is Holliday junction branch migration complex subunit RuvB, found in Klebsiella pneumoniae subsp. pneumoniae (strain ATCC 700721 / MGH 78578).